Consider the following 251-residue polypeptide: Octanoyltransferase (251 aa).

The BPL/LPL catalytic domain occupies Ala-56–Ser-237. Substrate contacts are provided by residues Arg-96–His-103, Ala-168–Gly-170, and Gly-181–Ser-183. Residue Cys-199 is the Acyl-thioester intermediate of the active site.

Belongs to the LipB family.

It localises to the cytoplasm. The catalysed reaction is octanoyl-[ACP] + L-lysyl-[protein] = N(6)-octanoyl-L-lysyl-[protein] + holo-[ACP] + H(+). It participates in protein modification; protein lipoylation via endogenous pathway; protein N(6)-(lipoyl)lysine from octanoyl-[acyl-carrier-protein]: step 1/2. Catalyzes the transfer of endogenously produced octanoic acid from octanoyl-acyl-carrier-protein onto the lipoyl domains of lipoate-dependent enzymes. Lipoyl-ACP can also act as a substrate although octanoyl-ACP is likely to be the physiological substrate. This is Octanoyltransferase from Burkholderia ambifaria (strain ATCC BAA-244 / DSM 16087 / CCUG 44356 / LMG 19182 / AMMD) (Burkholderia cepacia (strain AMMD)).